The sequence spans 829 residues: Periplasmic nitrate reductase (829 aa).

The segment at residues 1 to 29 is a signal peptide (tat-type signal); that stretch reads MKMTRRAFVKANAAASAAAVAGVTLPASA. Residues 41–97 enclose the 4Fe-4S Mo/W bis-MGD-type domain; sequence IKWDKAPCRFCGTGCSVLVGTQNGRVVATQGDPEAPVNKGLNCIKGYFLSKIMYGKD. [4Fe-4S] cluster-binding residues include Cys48, Cys51, Cys55, and Cys83. Mo-bis(molybdopterin guanine dinucleotide) is bound by residues Lys85, Gln152, Asn177, Cys181, 214-221, 245-249, 264-266, Met374, Gln378, Asn484, 510-511, Lys533, Asp560, and 718-727; these read WGSNMAEM, STYYH, QSD, SD, and TGRVLEHWHT. Phe794 lines the substrate pocket. The Mo-bis(molybdopterin guanine dinucleotide) site is built by Asn802 and Lys819.

This sequence belongs to the prokaryotic molybdopterin-containing oxidoreductase family. NasA/NapA/NarB subfamily. Component of the periplasmic nitrate reductase NapAB complex composed of NapA and NapB. [4Fe-4S] cluster is required as a cofactor. Requires Mo-bis(molybdopterin guanine dinucleotide) as cofactor. Predicted to be exported by the Tat system. The position of the signal peptide cleavage has not been experimentally proven.

Its subcellular location is the periplasm. The enzyme catalyses 2 Fe(II)-[cytochrome] + nitrate + 2 H(+) = 2 Fe(III)-[cytochrome] + nitrite + H2O. Catalytic subunit of the periplasmic nitrate reductase complex NapAB. Receives electrons from NapB and catalyzes the reduction of nitrate to nitrite. The polypeptide is Periplasmic nitrate reductase (Aliivibrio fischeri (strain ATCC 700601 / ES114) (Vibrio fischeri)).